Reading from the N-terminus, the 552-residue chain is MAEKQKHDGRVKIGHYVLGDTLGVGTFGKVKIGEHQLTGHKVAVKILNRQKIRSLDVVGKIKREIQNLKLFRHPHIIKLYQVISTPTDFFMVMEYVSGGELFDYICKHGRVEEVEARRLFQQILSAVDYCHRHMVVHRDLKPENVLLDAQMNAKIADFGLSNMMSDGEFLRTSCGSPNYAAPEVISGRLYAGPEVDIWSCGVILYALLCGTLPFDDEHVPTLFKKIRGGVFYIPDYLNRSVATLLMHMLQVDPLKRATIKDIREHEWFKQDLPSYLFPEDPSYDANVIDDEAVKEVCEKFECTESEVMNSLYSGDPQDQLAVAYHLIIDNRRIMNQASEFYLASSPPSGSFMDDSAMHIPPGLKPHPERMPPLIADSPKARCPLDALNTTKPKSLAVKKAKWHLGIRSQSKACDIMAEVYRAMKQLGFEWKVVNAYHLRVRRKNPVTGNYVKMSLQLYLVDSRSYLLDFKSIDDEVVEQRSGSSTPQRSCSAAGLHRARSSFDSSTAENHSLSGSLTGSLTGSTLSSASPRLGSHTMDFFEMCASLITALAR.

A Protein kinase domain is found at 16-268 (YVLGDTLGVG…IKDIREHEWF (253 aa)). Residues 22–30 (LGVGTFGKV) and lysine 45 contribute to the ATP site. Aspartate 139 acts as the Proton acceptor in catalysis. Position 172 is a phosphothreonine; by LKB1 and CaMKK2 (threonine 172). Threonine 258 bears the Phosphothreonine mark. An AIS region spans residues 291–376 (EAVKEVCEKF…PERMPPLIAD (86 aa)). Residues serine 377 and serine 491 each carry the phosphoserine modification.

This sequence belongs to the protein kinase superfamily. CAMK Ser/Thr protein kinase family. SNF1 subfamily. As to quaternary structure, AMPK is a heterotrimer of an alpha catalytic subunit (PRKAA1 or PRKAA2), a beta (PRKAB1 or PRKAB2) and a gamma non-catalytic subunits (PRKAG1, PRKAG2 or PRKAG3). Interacts with FNIP1 and FNIP2. Interacts with DUSP29. Interacts with ARF6. The phosphorylated form at Thr-172 mediated by CamKK2 interacts with ACSS2. Requires Mg(2+) as cofactor. In terms of processing, ubiquitinated. Post-translationally, phosphorylated at Thr-172 by STK11/LKB1 in complex with STE20-related adapter-alpha (STRADA) pseudo kinase and CAB39. Also phosphorylated at Thr-172 by CAMKK2; triggered by a rise in intracellular calcium ions, without detectable changes in the AMP/ATP ratio. CAMKK1 can also phosphorylate Thr-172, but at much lower level. Dephosphorylated by protein phosphatase 2A and 2C (PP2A and PP2C). Phosphorylated by ULK1; leading to negatively regulate AMPK activity and suggesting the existence of a regulatory feedback loop between ULK1 and AMPK. Dephosphorylated by PPM1A and PPM1B at Thr-172 (mediated by STK11/LKB1).

The protein resides in the cytoplasm. It localises to the nucleus. It catalyses the reaction L-seryl-[protein] + ATP = O-phospho-L-seryl-[protein] + ADP + H(+). It carries out the reaction L-threonyl-[protein] + ATP = O-phospho-L-threonyl-[protein] + ADP + H(+). The catalysed reaction is L-seryl-[acetyl-CoA carboxylase] + ATP = O-phospho-L-seryl-[acetyl-CoA carboxylase] + ADP + H(+). The enzyme catalyses L-seryl-[3-hydroxy-3-methylglutaryl-coenzyme A reductase] + ATP = O-phospho-L-seryl-[3-hydroxy-3-methylglutaryl-coenzyme A reductase] + ADP + H(+). Activated by phosphorylation on Thr-172. Binding of AMP to non-catalytic gamma subunit (PRKAG1, PRKAG2 or PRKAG3) results in allosteric activation, inducing phosphorylation on Thr-172. AMP-binding to gamma subunit also sustains activity by preventing dephosphorylation of Thr-172. ADP also stimulates Thr-172 phosphorylation, without stimulating already phosphorylated AMPK. ATP promotes dephosphorylation of Thr-172, rendering the enzyme inactive. Under physiological conditions AMPK mainly exists in its inactive form in complex with ATP, which is much more abundant than AMP. Selectively inhibited by compound C (6-[4-(2-Piperidin-1-yl-ethoxy)-phenyl)]-3-pyridin-4-yl-pyyrazolo[1,5-a] pyrimidine. Activated by resveratrol, a natural polyphenol present in red wine, and S17834, a synthetic polyphenol. Salicylate/aspirin directly activates kinase activity, primarily by inhibiting Thr-172 dephosphorylation. Its function is as follows. Catalytic subunit of AMP-activated protein kinase (AMPK), an energy sensor protein kinase that plays a key role in regulating cellular energy metabolism. In response to reduction of intracellular ATP levels, AMPK activates energy-producing pathways and inhibits energy-consuming processes: inhibits protein, carbohydrate and lipid biosynthesis, as well as cell growth and proliferation. AMPK acts via direct phosphorylation of metabolic enzymes, and by longer-term effects via phosphorylation of transcription regulators. Regulates lipid synthesis by phosphorylating and inactivating lipid metabolic enzymes such as ACACA, ACACB, GYS1, HMGCR and LIPE; regulates fatty acid and cholesterol synthesis by phosphorylating acetyl-CoA carboxylase (ACACA and ACACB) and hormone-sensitive lipase (LIPE) enzymes, respectively. Promotes lipolysis of lipid droplets by mediating phosphorylation of isoform 1 of CHKA (CHKalpha2). Regulates insulin-signaling and glycolysis by phosphorylating IRS1, PFKFB2 and PFKFB3. Involved in insulin receptor/INSR internalization. AMPK stimulates glucose uptake in muscle by increasing the translocation of the glucose transporter SLC2A4/GLUT4 to the plasma membrane, possibly by mediating phosphorylation of TBC1D4/AS160. Regulates transcription and chromatin structure by phosphorylating transcription regulators involved in energy metabolism such as CRTC2/TORC2, FOXO3, histone H2B, HDAC5, MEF2C, MLXIPL/ChREBP, EP300, HNF4A, p53/TP53, SREBF1, SREBF2 and PPARGC1A. Acts as a key regulator of glucose homeostasis in liver by phosphorylating CRTC2/TORC2, leading to CRTC2/TORC2 sequestration in the cytoplasm. In response to stress, phosphorylates 'Ser-36' of histone H2B (H2BS36ph), leading to promote transcription. Acts as a key regulator of cell growth and proliferation by phosphorylating FNIP1, TSC2, RPTOR, WDR24 and ATG1/ULK1: in response to nutrient limitation, negatively regulates the mTORC1 complex by phosphorylating RPTOR component of the mTORC1 complex and by phosphorylating and activating TSC2. Also phosphorylates and inhibits GATOR2 subunit WDR24 in response to nutrient limitation, leading to suppress glucose-mediated mTORC1 activation. In response to energetic stress, phosphorylates FNIP1, inactivating the non-canonical mTORC1 signaling, thereby promoting nuclear translocation of TFEB and TFE3, and inducing transcription of lysosomal or autophagy genes. In response to nutrient limitation, promotes autophagy by phosphorylating and activating ATG1/ULK1. In that process, it also activates WDR45/WIPI4. Phosphorylates CASP6, thereby preventing its autoprocessing and subsequent activation. AMPK also acts as a regulator of circadian rhythm by mediating phosphorylation of CRY1, leading to destabilize it. May regulate the Wnt signaling pathway by phosphorylating CTNNB1, leading to stabilize it. Also acts as a regulator of cellular polarity by remodeling the actin cytoskeleton; probably by indirectly activating myosin. Also phosphorylates CFTR, EEF2K, KLC1, NOS3 and SLC12A1. Plays an important role in the differential regulation of pro-autophagy (composed of PIK3C3, BECN1, PIK3R4 and UVRAG or ATG14) and non-autophagy (composed of PIK3C3, BECN1 and PIK3R4) complexes, in response to glucose starvation. Can inhibit the non-autophagy complex by phosphorylating PIK3C3 and can activate the pro-autophagy complex by phosphorylating BECN1. Upon glucose starvation, promotes ARF6 activation in a kinase-independent manner leading to cell migration. Upon glucose deprivation mediates the phosphorylation of ACSS2 at 'Ser-659', which exposes the nuclear localization signal of ACSS2, required for its interaction with KPNA1 and nuclear translocation. Upon stress, regulates mitochondrial fragmentation through phosphorylation of MTFR1L. The sequence is that of 5'-AMP-activated protein kinase catalytic subunit alpha-2 from Mus musculus (Mouse).